A 262-amino-acid polypeptide reads, in one-letter code: GTP cyclohydrolase FolE2 (262 aa).

The protein belongs to the GTP cyclohydrolase IV family.

It catalyses the reaction GTP + H2O = 7,8-dihydroneopterin 3'-triphosphate + formate + H(+). The protein operates within cofactor biosynthesis; 7,8-dihydroneopterin triphosphate biosynthesis; 7,8-dihydroneopterin triphosphate from GTP: step 1/1. In terms of biological role, converts GTP to 7,8-dihydroneopterin triphosphate. The chain is GTP cyclohydrolase FolE2 from Dichelobacter nodosus (strain VCS1703A).